Reading from the N-terminus, the 240-residue chain is MQKEKILVIDDEASIRRILETRLSIIGYDVISAADGEEALSIFKREHPNLVVLDLMMPKLDGYGVCQELRKESDVPIIMLTALSDVSDRITGLELGADDYIVKPFSPKELEARIRSVLRRVDKASSNNNLPNSGIINIGFLKIDVNKHQVYKNNERVRLTGMEFSLLELLISKAGQPFSRATILQEVWGYTAERQVDTRVVDVHISRLRAKLEDDPSNPDLILTARGTGYLFQRLNDSIV.

The region spanning 5 to 118 (KILVIDDEAS…ELEARIRSVL (114 aa)) is the Response regulatory domain. Residue Asp54 is modified to 4-aspartylphosphate. The segment at residues 74 to 92 (DVPIIMLTALSDVSDRITG) is a DNA-binding region (H-T-H motif). A DNA-binding region (ompR/PhoB-type) is located at residues 133-234 (SGIINIGFLK…ARGTGYLFQR (102 aa)).

It localises to the plastid. It is found in the chloroplast. Functionally, probable promoter-specific protein mediating the interaction between DNA and RNA polymerase. In Porphyridium aerugineum (Red microalga), this protein is Probable transcriptional regulator ycf27 (ycf27).